The primary structure comprises 1091 residues: Integrin alpha-6 (1091 aa).

A signal peptide spans Met-1 to Ala-23. Residues Phe-24 to Ser-1011 are Extracellular-facing. 7 FG-GAP repeats span residues Glu-30–Thr-95, Asn-101–Asp-166, Asp-176–Met-229, Asp-244–His-300, Leu-301–Asn-363, Val-364–Thr-419, and Lys-420–Asn-479. Asn-78 is a glycosylation site (N-linked (GlcNAc...) asparagine). Cystine bridges form between Cys-86/Cys-94, Cys-131/Cys-154, and Cys-175/Cys-188. N-linked (GlcNAc...) asparagine glycans are attached at residues Asn-223 and Asn-284. The Ca(2+) site is built by Asp-324, Asn-326, Asp-328, and Asp-332. N-linked (GlcNAc...) asparagine glycosylation occurs at Asn-370. Positions 386, 388, 390, 392, 394, 441, 443, 445, 447, and 449 each coordinate Ca(2+). Disulfide bonds link Cys-489–Cys-496, Cys-502–Cys-562, Cys-626–Cys-632, and Cys-726–Cys-737. 3 N-linked (GlcNAc...) asparagine glycosylation sites follow: Asn-731, Asn-746, and Asn-927. 2 disulfides stabilise this stretch: Cys-881-Cys-928 and Cys-934-Cys-939. Asn-958 carries an N-linked (GlcNAc...) asparagine glycan. The helical transmembrane segment at Gly-1012–Trp-1037 threads the bilayer. Topologically, residues Lys-1038–Ser-1091 are cytoplasmic. Cys-1039 carries the S-palmitoyl cysteine; by DHHC3 lipid modification. The short motif at Gly-1040–Arg-1044 is the GFFKR motif element. Position 1064 is a phosphoserine (Arg-1064).

Belongs to the integrin alpha chain family. As to quaternary structure, heterodimer of an alpha and a beta subunit. The alpha subunit is composed of a heavy and a light chain linked by a disulfide bond. Alpha-6 associates with either beta-1 (ITGB1) or beta-4 (ITGB4) to form ITGA6:ITGB1 and ITGA6:ITGB4, respectively. ITGA6:ITGB1 is found in a complex with CD9; interaction takes place in oocytes and is involved in sperm-egg fusion. ITGA6:ITGB4 is found in a ternary complex with NRG1 and ERBB3. ITGA6:ITGB4 is found in a ternary complex with IGF1 and IGF1R. ITGA6:ITGB4 interacts with IGF2. Interacts with ADAM9. Interacts with RAB21. Interacts with MDK. ITGA6:ITGB1 interacts with MDK; this interaction mediates MDK-induced neurite outgrowth. Interacts with CD82; this interaction down-regulates ITGA6-mediated cell adhesion. In terms of processing, isoforms containing segment A, but not segment B, are the major targets for PMA-induced phosphorylation. Phosphorylation occurs on 'Ser-1064' of isoform alpha-6X1A. Phosphorylation is not required for the induction of integrin alpha-6A/beta-1 high affinity but may reduce the affinity for ligand. Undergoes PLAU-mediated cleavage at residues Arg-595-596-Arg in a time-dependent manner to produce processed integrin alpha-6 (alpha6p). Post-translationally, palmitoylation by DHHC3 enhances stability and cell surface expression. In terms of tissue distribution, expressed at low levels in normal skin tissue with elevated levels in skin tumors.

Its subcellular location is the cell membrane. Its function is as follows. Integrin alpha-6/beta-1 (ITGA6:ITGB1) is a receptor for laminin on platelets. Integrin alpha-6/beta-1 (ITGA6:ITGB1) is present in oocytes and is involved in sperm-egg fusion. Integrin alpha-6/beta-4 (ITGA6:ITGB4) is a receptor for laminin in epithelial cells and it plays a critical structural role in the hemidesmosome. ITGA6:ITGB4 binds to NRG1 (via EGF domain) and this binding is essential for NRG1-ERBB signaling. ITGA6:ITGB4 binds to IGF1 and this binding is essential for IGF1 signaling. ITGA6:ITGB4 binds to IGF2 and this binding is essential for IGF2 signaling. In Mus musculus (Mouse), this protein is Integrin alpha-6 (Itga6).